A 437-amino-acid polypeptide reads, in one-letter code: MNIPFNSVSKIQWRNPSPVSDTSCLVCGDPHGKRHYGAMSCNGCKGFFRRSIWEKRTYKCSFNNECIIEFKYRNRCRACRLKRCLHVGMDANAVRSERTRKIKTEIDGDVKLEIKEEPADSEDADDECPLDIKPDIAMAWQTKEIIAHMLYEEDRVLNWEEPYNKLRYYTMDSEVLQAIKDPSQVCARTKINWNSHSRPLITIEALRFNWCRTFTLTIDWFETLPEYRALIDDDKELLVKFSLMPVGWLWYAYKSYEYRCDGIVFVDGSWFPRDKTIQQQVCPTCVLYYGRITESFMADVVNSMKELEMDETEMVLLKAICHLQPDYRLTRRGNDVISTGREKYKRALCEYIRMKSNGFMDASFRLCKLMQILPVVDILGKYEDESALLVSLGETEFNGSGGGLPYDIHASDSHFARKNRRKSDNQYHQQHVPLHIQ.

The nuclear receptor DNA-binding region spans 21–96 (DTSCLVCGDP…VGMDANAVRS (76 aa)). 2 NR C4-type zinc fingers span residues 24-44 (CLVC…CNGC) and 60-79 (CSFN…CRAC). An NR LBD domain is found at 141–409 (QTKEIIAHML…SGGGLPYDIH (269 aa)).

The protein belongs to the nuclear hormone receptor family.

It localises to the nucleus. Orphan nuclear receptor. The chain is Nuclear hormone receptor family member nhr-100 (nhr-100) from Caenorhabditis elegans.